A 365-amino-acid polypeptide reads, in one-letter code: Glycine oxidase (365 aa).

Residues 12-13, 32-33, 40-41, 45-47, and Ile-173 contribute to the FAD site; these read VI, DQ, SS, and GGI. Arg-302 contributes to the substrate binding site. An FAD-binding site is contributed by 327-333; that stretch reads HYRNGLV.

Belongs to the DAO family. ThiO subfamily. Monomer. FAD is required as a cofactor.

It catalyses the reaction glycine + O2 + H2O = glyoxylate + H2O2 + NH4(+). It carries out the reaction sarcosine + O2 + H2O = methylamine + glyoxylate + H2O2. The protein operates within cofactor biosynthesis; thiamine diphosphate biosynthesis. In terms of biological role, catalyzes the oxidation of glycine, leading to glyoxyl imine and hydrogen peroxide as primary products; glyoxyl imine is used for the biosynthesis of the thiazole ring of thiamine. Otherwise, glyoxyl imine is spontaneously hydrolyzed in water to produce glyoxylate and ammonia. Can also use sarcosine (N-methylglycine) as substrate, and, to a lesser extent, N-ethylglycine and D-proline. Has no activity towards other amino-acids D-Asp, D-Glu, D-Gln, D-His, D-Leu, D-Lys, D-ornithine, D-Trp, D-Val, L-Ala, L-Asp, L-Glu, L-His, L-Leu, L-Lys, L-Met and L-Pro. The protein is Glycine oxidase of Pseudomonas putida (strain ATCC 47054 / DSM 6125 / CFBP 8728 / NCIMB 11950 / KT2440).